A 159-amino-acid polypeptide reads, in one-letter code: MEITIVAVGKIKERYLKEGIAEYLKRLSPYARLAVIEVDDENAPENLSPAEAEKVVKKEGERILAKITPSSFVIALDLKGKNLSSEEFAHFISEKNLYGQSKLTFIIGGSLGLSREVLERADFKLSFGRMTYPHQLMRLILLEQIYRAFKIIRGEPYHK.

S-adenosyl-L-methionine-binding positions include L76, G108, and 127-132; that span reads FGRMTY.

The protein belongs to the RNA methyltransferase RlmH family. Homodimer.

The protein resides in the cytoplasm. It catalyses the reaction pseudouridine(1915) in 23S rRNA + S-adenosyl-L-methionine = N(3)-methylpseudouridine(1915) in 23S rRNA + S-adenosyl-L-homocysteine + H(+). Functionally, specifically methylates the pseudouridine at position 1915 (m3Psi1915) in 23S rRNA. In Carboxydothermus hydrogenoformans (strain ATCC BAA-161 / DSM 6008 / Z-2901), this protein is Ribosomal RNA large subunit methyltransferase H.